Consider the following 706-residue polypeptide: Integrator complex subunit 13 (706 aa).

The disordered stretch occupies residues Pro-564–Leu-603. The stretch at Glu-567–Asp-622 forms a coiled coil. The Nuclear localization signal (NLS) signature appears at Lys-572–Asp-582. Lys-611 is covalently cross-linked (Glycyl lysine isopeptide (Lys-Gly) (interchain with G-Cter in SUMO2)). Positions Ala-615–Val-636 are enriched in basic and acidic residues. Residues Ala-615–Pro-650 are disordered. 3 positions are modified to phosphoserine: Ser-623, Ser-626, and Ser-678. Positions Gly-649–Gly-694 are cleavage module binding motif (CMBM).

It belongs to the Integrator subunit 13 family. In terms of assembly, component of the Integrator complex, composed of core subunits INTS1, INTS2, INTS3, INTS4, INTS5, INTS6, INTS7, INTS8, INTS9/RC74, INTS10, INTS11/CPSF3L, INTS12, INTS13, INTS14 and INTS15. The core complex associates with protein phosphatase 2A subunits PPP2CA and PPP2R1A, to form the Integrator-PP2A (INTAC) complex. INTS13 is part of the tail subcomplex, composed of INTS10, INTS13, INTS14 and INTS15. Interacts with transcription factors ZNF609 and ZNF655. Interacts with PAFAH1B1; this interaction may be required for proper recruitment of dynein complexes to the nuclear envelope at prophase. Widely expressed. Tends to be up-regulated in seminomas compared to normal testis.

The protein localises to the nucleus. It localises to the cytoplasm. In terms of biological role, component of the integrator complex, a multiprotein complex that terminates RNA polymerase II (Pol II) transcription in the promoter-proximal region of genes. The integrator complex provides a quality checkpoint during transcription elongation by driving premature transcription termination of transcripts that are unfavorably configured for transcriptional elongation: the complex terminates transcription by (1) catalyzing dephosphorylation of the C-terminal domain (CTD) of Pol II subunit POLR2A/RPB1 and SUPT5H/SPT5, (2) degrading the exiting nascent RNA transcript via endonuclease activity and (3) promoting the release of Pol II from bound DNA. The integrator complex is also involved in terminating the synthesis of non-coding Pol II transcripts, such as enhancer RNAs (eRNAs), small nuclear RNAs (snRNAs), telomerase RNAs and long non-coding RNAs (lncRNAs). Within the integrator complex, INTS13 is part of the integrator tail module and acts as a platform for the recruitment of transcription factors at promoters. At prophase, mediates recruitment of cytoplasmic dynein to the nuclear envelope, a step important for proper centrosome-nucleus coupling. At G2/M phase, may be required for proper spindle formation and execution of cytokinesis. This Homo sapiens (Human) protein is Integrator complex subunit 13.